The sequence spans 540 residues: MDVSILRDVRPPVTSYAPNIWADTFSNISLDEEVQKKYAETIEALKQVVRGMLMAAATPIKQMIFIDTLERLGLAYHFETEIEHKLQKIYDDNVCGDDCDLFTTALRFRLLRQHRHHVSCDVFDKFLYEEGKFKGDAEGLLSLYEASHVRFHNEKILEEAERFTRQELSCWIKLQSPLKDKVKRALERPLHREVPILYARHFISIYEKDESMDEHLLKLAKFNFNFLQNLYKKELYDLSRWWNKFDLKTKLPYIRDRLAEAYLWGVGYHFEPQYSYVRKGVVLSIKIIGILDDTYDNYATVNEAQLFTEILDRWSMDEIDRLPDYMKIVLHFVMSAYEEYERDAKIVYGKKFASPYFKETIQQLARGYNQELKWVMEKQMPPFKDYLKNSEITSCIYIMFASIIPGLKSFTQEAIDWIKNEPNFAVKAGLIGRYWDDIGSHKRESKGGEMLTVMDCYMKQYSVSIQETISEFAKAVEDSWKEVNEGWVYTISMSKEITVQFLNYSRMCDASYNRNNGDGYTDPSFAKSNITALFVDPIII.

5 residues coordinate Mg(2+): Asp292, Asp296, Asp436, Ser440, and Glu444. Residues 292–296 (DDTYD) carry the DDXXD motif motif.

Belongs to the terpene synthase family. Mg(2+) serves as cofactor. It depends on Mn(2+) as a cofactor.

The catalysed reaction is (2E,6E)-farnesyl diphosphate = (+)-gamma-cadinene + diphosphate. It participates in secondary metabolite biosynthesis; terpenoid biosynthesis. Sesquiterpene synthase that catalyzes the cyclization of trans,trans-farnesyl diphosphate (FPP) to gamma cadinene. The sequence is that of Gamma-cadinene synthase (CDS) from Ocimum basilicum (Sweet basil).